The sequence spans 253 residues: Methionine aminopeptidase (253 aa).

A substrate-binding site is contributed by histidine 78. A divalent metal cation is bound by residues aspartate 95, aspartate 106, and histidine 169. Histidine 176 is a substrate binding site. Residues glutamate 206 and glutamate 237 each contribute to the a divalent metal cation site.

This sequence belongs to the peptidase M24A family. Methionine aminopeptidase type 1 subfamily. Monomer. Requires Co(2+) as cofactor. Zn(2+) is required as a cofactor. The cofactor is Mn(2+). It depends on Fe(2+) as a cofactor.

The catalysed reaction is Release of N-terminal amino acids, preferentially methionine, from peptides and arylamides.. Removes the N-terminal methionine from nascent proteins. The N-terminal methionine is often cleaved when the second residue in the primary sequence is small and uncharged (Met-Ala-, Cys, Gly, Pro, Ser, Thr, or Val). Requires deformylation of the N(alpha)-formylated initiator methionine before it can be hydrolyzed. This chain is Methionine aminopeptidase, found in Helicobacter pylori (strain J99 / ATCC 700824) (Campylobacter pylori J99).